The chain runs to 651 residues: Histone-lysine N-methyltransferase family member SUVH2 (651 aa).

The tract at residues 1–28 (MSTLLPFPDLNLMPDSQSSTAGTTAGDT) is disordered. A compositionally biased stretch (low complexity) spans 15–28 (DSQSSTAGTTAGDT). In terms of domain architecture, YDG spans 202-358 (DKHIVGPVTG…KFRLVRIEGQ (157 aa)). The 59-residue stretch at 434-492 (TGCECKLSCTDDCLCARKNGGEFAYDDNGHLLKGKHVVFECGEFCTCGPSCKSRVTQKG) folds into the Pre-SET domain. Zn(2+) is bound by residues Cys436, Cys438, Cys442, Cys446, Cys448, Cys474, Cys478, Cys480, and Cys484. The 144-residue stretch at 495–638 (NRLEVFRSKE…PLAELSLDYG (144 aa)) folds into the SET domain.

Belongs to the class V-like SAM-binding methyltransferase superfamily. Histone-lysine methyltransferase family. Suvar3-9 subfamily. Self-interacts. Interacts with DNA-directed RNA polymerase V subunit NRPE1 and with DRD1 and DMS3. Binds to MORC1/CRT1. As to expression, expressed at low levels in leaves stems and flowers.

Its subcellular location is the nucleus. It localises to the chromosome. The protein localises to the centromere. Histone methyltransferase family member that plays a central role in gene silencing. Together with MORC6 and SUVH9, regulates the silencing of some transposable elements (TEs). According to PubMed:15775980, it is required for normal methylation of 'Lys-9' and 'Lys-27' of histone H3, 'Lys-20' of H4, and cytosine, but PubMed:19043555 see no significant effect on histone methylation when the gene is mutated. According to PubMed:19043555, the protein does not bind S-adenosyl-L-methionine and lacks methyltransferase activity. Instead, it may function downstream of DRM2 in RNA-directed DNA methylation, binding to methylated DNA and recruiting DNA-directed RNA polymerase V to chromatin. This is Histone-lysine N-methyltransferase family member SUVH2 (SUVH2) from Arabidopsis thaliana (Mouse-ear cress).